A 507-amino-acid chain; its full sequence is ATP synthase subunit alpha, chloroplastic (507 aa).

Gly-170 to Thr-177 serves as a coordination point for ATP. Thr-257 carries the post-translational modification Phosphothreonine.

Belongs to the ATPase alpha/beta chains family. In terms of assembly, F-type ATPases have 2 components, CF(1) - the catalytic core - and CF(0) - the membrane proton channel. CF(1) has five subunits: alpha(3), beta(3), gamma(1), delta(1), epsilon(1). CF(0) has four main subunits: a, b, b' and c.

It is found in the plastid. The protein resides in the chloroplast thylakoid membrane. The enzyme catalyses ATP + H2O + 4 H(+)(in) = ADP + phosphate + 5 H(+)(out). Produces ATP from ADP in the presence of a proton gradient across the membrane. The alpha chain is a regulatory subunit. This is ATP synthase subunit alpha, chloroplastic from Crucihimalaya wallichii (Rock-cress).